The chain runs to 776 residues: DNA topoisomerase 1 (776 aa).

The region spanning 1–111 is the Toprim domain; sequence MKLVIVESPA…VESDDFFKRV (111 aa). Mg(2+) contacts are provided by Glu-7 and Asp-80. Residues 132-568 enclose the Topo IA-type catalytic domain; it reads DTNLVNAQQA…FWRGFNHNIE (437 aa). The tract at residues 166-171 is interaction with DNA; that stretch reads SAGRVQ. Tyr-304 acts as the O-(5'-phospho-DNA)-tyrosine intermediate in catalysis. The C4-type zinc-finger motif lies at 600–627; that stretch reads CPSCKTGQLSLKLGKFGAFLACSNYPEC.

The protein belongs to the type IA topoisomerase family. In terms of assembly, monomer. Requires Mg(2+) as cofactor.

It catalyses the reaction ATP-independent breakage of single-stranded DNA, followed by passage and rejoining.. Its function is as follows. Releases the supercoiling and torsional tension of DNA, which is introduced during the DNA replication and transcription, by transiently cleaving and rejoining one strand of the DNA duplex. Introduces a single-strand break via transesterification at a target site in duplex DNA. The scissile phosphodiester is attacked by the catalytic tyrosine of the enzyme, resulting in the formation of a DNA-(5'-phosphotyrosyl)-enzyme intermediate and the expulsion of a 3'-OH DNA strand. The free DNA strand then undergoes passage around the unbroken strand, thus removing DNA supercoils. Finally, in the religation step, the DNA 3'-OH attacks the covalent intermediate to expel the active-site tyrosine and restore the DNA phosphodiester backbone. The chain is DNA topoisomerase 1 from Rickettsia prowazekii (strain Madrid E).